The sequence spans 229 residues: Large ribosomal subunit protein uL1 (229 aa).

This sequence belongs to the universal ribosomal protein uL1 family. Part of the 50S ribosomal subunit.

Functionally, binds directly to 23S rRNA. The L1 stalk is quite mobile in the ribosome, and is involved in E site tRNA release. Protein L1 is also a translational repressor protein, it controls the translation of the L11 operon by binding to its mRNA. The sequence is that of Large ribosomal subunit protein uL1 from Actinobacillus succinogenes (strain ATCC 55618 / DSM 22257 / CCUG 43843 / 130Z).